The following is a 362-amino-acid chain: Phospho-N-acetylmuramoyl-pentapeptide-transferase (362 aa).

A run of 10 helical transmembrane segments spans residues 27-47 (VMAAMTALLISFACGPAVIRW), 73-93 (TMGGALIIIAIAVTTLLWGDL), 97-117 (YVWVTLLVTLGFGAVGWVDDW), 132-152 (WKYLWTSLIALAAALFLGLTA), 160-180 (LIVPFFKAVSYPLGMLGFVAL), 200-220 (GLAIMPTVMVAGALAIFAYVA), 237-257 (AGELAVFCGALAGAGLGFLWF), 264-284 (VFMGDVGALALGAALGTVAVV), 289-309 (IVLFIMGGLFVAETLSVMVQV), and 339-359 (QVVVRFWIITIMLVLFGLSTL).

The protein belongs to the glycosyltransferase 4 family. MraY subfamily. Mg(2+) serves as cofactor.

It localises to the cell inner membrane. The enzyme catalyses UDP-N-acetyl-alpha-D-muramoyl-L-alanyl-gamma-D-glutamyl-meso-2,6-diaminopimeloyl-D-alanyl-D-alanine + di-trans,octa-cis-undecaprenyl phosphate = di-trans,octa-cis-undecaprenyl diphospho-N-acetyl-alpha-D-muramoyl-L-alanyl-D-glutamyl-meso-2,6-diaminopimeloyl-D-alanyl-D-alanine + UMP. The protein operates within cell wall biogenesis; peptidoglycan biosynthesis. Functionally, catalyzes the initial step of the lipid cycle reactions in the biosynthesis of the cell wall peptidoglycan: transfers peptidoglycan precursor phospho-MurNAc-pentapeptide from UDP-MurNAc-pentapeptide onto the lipid carrier undecaprenyl phosphate, yielding undecaprenyl-pyrophosphoryl-MurNAc-pentapeptide, known as lipid I. The protein is Phospho-N-acetylmuramoyl-pentapeptide-transferase of Aromatoleum aromaticum (strain DSM 19018 / LMG 30748 / EbN1) (Azoarcus sp. (strain EbN1)).